A 203-amino-acid polypeptide reads, in one-letter code: Galactoside O-acetyltransferase (203 aa).

Residues D17, S71, N85, and D93 each contribute to the substrate site. N85 lines the acetyl-CoA pocket. The Proton donor/acceptor role is filled by H115. Acetyl-CoA contacts are provided by residues S142, A160, 165-166, R180, and R183; that span reads TK.

The protein belongs to the transferase hexapeptide repeat family. As to quaternary structure, homotrimer. In terms of processing, the N-terminus of this protein is heterogeneous because the initiator methionine is only partially cleaved.

The protein resides in the cytoplasm. It catalyses the reaction a beta-D-galactoside + acetyl-CoA = a 6-acetyl-beta-D-galactoside + CoA. In terms of biological role, catalyzes the CoA-dependent transfer of an acetyl group to the 6-O-methyl position of a range of galactosides, glucosides, and lactosides. May assist cellular detoxification by acetylating non-metabolizable pyranosides, thereby preventing their reentry into the cell. The chain is Galactoside O-acetyltransferase (lacA) from Escherichia coli (strain K12).